Here is a 72-residue protein sequence, read N- to C-terminus: Brevinin-2SN3 (72 aa).

A signal peptide spans 1-22 (MFTLKKPLLLLVFLGMISLSLC). A propeptide spans 23 to 40 (QDERGADEDDGGEMTEEE) (removed in mature form). C66 and C72 are oxidised to a cystine.

Belongs to the frog skin active peptide (FSAP) family. Brevinin subfamily. As to expression, expressed by the skin glands.

Its subcellular location is the secreted. Functionally, antimicrobial peptide. Active against a variety of Gram-negative and Gram-positive bacterial strains. Active against fungus C.glabrata 090902 but not against C.albicans ATCC 10231. Shows hemolytic activity against human erythrocytes. The sequence is that of Brevinin-2SN3 from Sylvirana spinulosa (Fine-spined frog).